The primary structure comprises 227 residues: Lipoprotein-releasing system ATP-binding protein LolD (227 aa).

Positions 6–227 (LTSQKLYKSY…LHEGSLYARE (222 aa)) constitute an ABC transporter domain. ATP is bound at residue 42–49 (GPSGSGKS).

This sequence belongs to the ABC transporter superfamily. Lipoprotein translocase (TC 3.A.1.125) family. The complex is composed of two ATP-binding proteins (LolD) and two transmembrane proteins (LolC and LolE).

It localises to the cell inner membrane. In terms of biological role, part of the ABC transporter complex LolCDE involved in the translocation of mature outer membrane-directed lipoproteins, from the inner membrane to the periplasmic chaperone, LolA. Responsible for the formation of the LolA-lipoprotein complex in an ATP-dependent manner. The protein is Lipoprotein-releasing system ATP-binding protein LolD of Legionella pneumophila (strain Paris).